The chain runs to 311 residues: UDP-N-acetylenolpyruvoylglucosamine reductase (311 aa).

The FAD-binding PCMH-type domain maps to 28-197 (KIGGNARWLV…VSARFHLARG (170 aa)). Residue arginine 177 is part of the active site. Serine 226 functions as the Proton donor in the catalytic mechanism. The active site involves glutamate 296.

Belongs to the MurB family. It depends on FAD as a cofactor.

It localises to the cytoplasm. The catalysed reaction is UDP-N-acetyl-alpha-D-muramate + NADP(+) = UDP-N-acetyl-3-O-(1-carboxyvinyl)-alpha-D-glucosamine + NADPH + H(+). The protein operates within cell wall biogenesis; peptidoglycan biosynthesis. In terms of biological role, cell wall formation. The chain is UDP-N-acetylenolpyruvoylglucosamine reductase from Magnetococcus marinus (strain ATCC BAA-1437 / JCM 17883 / MC-1).